We begin with the raw amino-acid sequence, 380 residues long: Cytochrome b (380 aa).

A run of 4 helical transmembrane segments spans residues 34–54 (FGSL…LLAM), 78–99 (WLIR…FLHI), 114–134 (WNTG…GYVL), and 179–199 (FFAL…THLM). Heme b is bound by residues His-84 and His-98. 2 residues coordinate heme b: His-183 and His-197. His-202 is a binding site for a ubiquinone. 4 consecutive transmembrane segments (helical) span residues 227 to 247 (LKDI…ALFS), 289 to 309 (LGGV…PFLH), 321 to 341 (LSQT…WVGS), and 348 to 368 (FIII…ILFP).

Belongs to the cytochrome b family. The cytochrome bc1 complex contains 11 subunits: 3 respiratory subunits (MT-CYB, CYC1 and UQCRFS1), 2 core proteins (UQCRC1 and UQCRC2) and 6 low-molecular weight proteins (UQCRH/QCR6, UQCRB/QCR7, UQCRQ/QCR8, UQCR10/QCR9, UQCR11/QCR10 and a cleavage product of UQCRFS1). This cytochrome bc1 complex then forms a dimer. Heme b is required as a cofactor.

Its subcellular location is the mitochondrion inner membrane. Functionally, component of the ubiquinol-cytochrome c reductase complex (complex III or cytochrome b-c1 complex) that is part of the mitochondrial respiratory chain. The b-c1 complex mediates electron transfer from ubiquinol to cytochrome c. Contributes to the generation of a proton gradient across the mitochondrial membrane that is then used for ATP synthesis. This chain is Cytochrome b (MT-CYB), found in Tragopan satyra (Satyr tragopan).